The sequence spans 309 residues: Elongation factor Ts (309 aa).

Residues 82 to 85 (TDFV) are involved in Mg(2+) ion dislocation from EF-Tu.

This sequence belongs to the EF-Ts family.

The protein localises to the cytoplasm. Functionally, associates with the EF-Tu.GDP complex and induces the exchange of GDP to GTP. It remains bound to the aminoacyl-tRNA.EF-Tu.GTP complex up to the GTP hydrolysis stage on the ribosome. The sequence is that of Elongation factor Ts from Rickettsia bellii (strain OSU 85-389).